Consider the following 299-residue polypeptide: 33 kDa chaperonin (299 aa).

2 cysteine pairs are disulfide-bonded: Cys-240–Cys-242 and Cys-273–Cys-276.

The protein belongs to the HSP33 family. In terms of processing, under oxidizing conditions two disulfide bonds are formed involving the reactive cysteines. Under reducing conditions zinc is bound to the reactive cysteines and the protein is inactive.

The protein localises to the cytoplasm. Functionally, redox regulated molecular chaperone. Protects both thermally unfolding and oxidatively damaged proteins from irreversible aggregation. Plays an important role in the bacterial defense system toward oxidative stress. In Gloeothece citriformis (strain PCC 7424) (Cyanothece sp. (strain PCC 7424)), this protein is 33 kDa chaperonin.